The chain runs to 246 residues: Small ribosomal subunit protein uS2 (246 aa).

The disordered stretch occupies residues 226 to 246 (QGEEEAEVAEETAPETETTTA). The segment covering 229–239 (EEAEVAEETAP) has biased composition (acidic residues).

This sequence belongs to the universal ribosomal protein uS2 family. As to quaternary structure, part of the 30S ribosomal subunit. Interacts with BrxC.

In Bacillus subtilis (strain 168), this protein is Small ribosomal subunit protein uS2 (rpsB).